We begin with the raw amino-acid sequence, 194 residues long: VVGGDECNINEHRSLVAIFVSTGFFCSGTLINQEVLNQEDKFICPNXKKNNEVLDVTNSENIVPLSLPSSPPSVGSVCRIMGWGTITPEKKTYPNVPHCANINLLDDAECHVGYERQGKEYRTLCAGVVQGGKDTCQGDSGGPLICNGQFQGIVSWGPHPCGHPGEPGVYTKVFDYTEWIQSIIAGNTAATCPP.

5 disulfide bridges follow: C7–C99, C44–C192, C78–C146, C110–C125, and C136–C161. Residues 36-185 (LNQEDKFICP…YTEWIQSIIA (150 aa)) enclose the Peptidase S1 domain. S140 acts as the Charge relay system in catalysis.

Belongs to the peptidase S1 family. Snake venom subfamily. Monomer. Post-translationally, N-glycosylated. Expressed by the venom gland.

It is found in the secreted. With respect to regulation, completely inhibited by the serine protease inhibitors NPGB and PMSF, partially inhibited by benzamidines, and weakly or not inhibited by SBTI and EDTA. Functionally, shows kallikrein-like activity, releasing bradykinin from kininogen. Also activates plasminogen, which is also a plasma kallikrein activity. Is active upon the kallikrein substrates S-2266 and S-2302, suggesting a preference for Arg in P1 position. In vivo, lowers blood pressure after intravenous injection in rat. The polypeptide is Kallikrein-like enzyme LV-Ka (Lachesis muta muta (Bushmaster)).